The sequence spans 223 residues: Zinc-finger homeodomain protein 12 (223 aa).

The segment covering 1-20 (MSSLSKPNRQFLSPTTNNQD) has biased composition (polar residues). The tract at residues 1–24 (MSSLSKPNRQFLSPTTNNQDTGRE) is disordered. A ZF-HD dimerization-type; degenerate zinc finger spans residues 37-88 (YNECLKNHAVSLGGHALDGCGEFTPKSTTILTDPPSLRCDACGCHRNFHRRS). A DNA-binding region (homeobox; atypical) is located at residues 147–204 (KKHKRTKFTAEQKVKMRGFAERAGWKINGWDEKWVREFCSEVGIERKVLKVWIHNNKY).

In terms of assembly, homo- and heterodimer with other ZFHD proteins. Interacts with ZHD11.

The protein resides in the nucleus. Functionally, putative transcription factor. The protein is Zinc-finger homeodomain protein 12 (ZHD12) of Arabidopsis thaliana (Mouse-ear cress).